A 440-amino-acid chain; its full sequence is Protein dumpy-20 (440 aa).

The disordered stretch occupies residues 96-119 (ILSDPSLHGSNSSSSTSDVGSSVD). Over residues 98–119 (SDPSLHGSNSSSSTSDVGSSVD) the composition is skewed to low complexity. BED-type zinc fingers lie at residues 137-186 (PTEN…YQKV) and 350-399 (KTEH…YNDV). Positions 156, 159, 174, 179, 369, 372, 387, and 392 each coordinate Zn(2+).

Its function is as follows. May be directly or indirectly involved in cuticle function. This is Protein dumpy-20 (dpy-20) from Caenorhabditis elegans.